We begin with the raw amino-acid sequence, 64 residues long: Basic secretory protease (64 aa).

The cofactor is a divalent metal cation. In terms of processing, glycosylated.

With respect to regulation, inhibited by EDTA. Metalloprotease, digests gelatin and azocasein (in vitro). The protein is Basic secretory protease of Boswellia serrata (Indian frankincense).